The following is a 601-amino-acid chain: Proteasome-associated ATPase (601 aa).

The span at 1–15 (MSGPRSGSGSGGSTG) shows a compositional bias: gly residues. The interval 1 to 31 (MSGPRSGSGSGGSTGRPGDAESRRSAYEKEA) is disordered. A compositionally biased stretch (basic and acidic residues) spans 18–31 (GDAESRRSAYEKEA). Residues 18–106 (GDAESRRSAY…LKEEVDRLAQ (89 aa)) are a coiled coil. 289–294 (GCGKTL) contacts ATP. A docks into pockets in the proteasome alpha-ring region spans residues 600–601 (YL).

It belongs to the AAA ATPase family. As to quaternary structure, homohexamer. Assembles into a hexameric ring structure that caps the 20S proteasome core. Strongly interacts with the prokaryotic ubiquitin-like protein Pup through a hydrophobic interface; the interacting region of ARC lies in its N-terminal coiled-coil domain. There is one Pup binding site per ARC hexamer ring. Upon ATP-binding, the C-terminus of ARC interacts with the alpha-rings of the proteasome core, possibly by binding to the intersubunit pockets.

Its pathway is protein degradation; proteasomal Pup-dependent pathway. Functionally, ATPase which is responsible for recognizing, binding, unfolding and translocation of pupylated proteins into the bacterial 20S proteasome core particle. May be essential for opening the gate of the 20S proteasome via an interaction with its C-terminus, thereby allowing substrate entry and access to the site of proteolysis. Thus, the C-termini of the proteasomal ATPase may function like a 'key in a lock' to induce gate opening and therefore regulate proteolysis. The protein is Proteasome-associated ATPase of Frankia alni (strain DSM 45986 / CECT 9034 / ACN14a).